We begin with the raw amino-acid sequence, 1356 residues long: Fibronectin type III domain containing protein 3C1 (1356 aa).

3 disordered regions span residues 303 to 341 (PRNM…SDNN), 356 to 402 (TYDE…SDVA), and 428 to 452 (NQKK…QPGC). The segment covering 308–341 (DNIPDTNTTDTITSSSAHTPSISTSNATFCSDNN) has biased composition (low complexity). Residues 370-393 (PSCTSQSASNPSVSENAHNPSSIN) show a composition bias toward polar residues. Positions 439–448 (LKEHNTEDRT) are enriched in basic and acidic residues. 4 consecutive Fibronectin type-III domains span residues 454 to 549 (NIEK…TPGC), 553 to 648 (PPLA…TPPA), 650 to 741 (LPPK…TRPA), and 745 to 842 (CPNK…TLPP). Over residues 825–838 (GQSRPSDVLTIQTP) the composition is skewed to polar residues. Residues 825–894 (GQSRPSDVLT…QDRKVHPSSE (70 aa)) are disordered. The segment covering 883-894 (PHQDRKVHPSSE) has biased composition (basic and acidic residues). Fibronectin type-III domains follow at residues 914–1007 (PPSQ…TPGT), 1017–1103 (EVES…TKPL), 1104–1199 (PPEP…TKSP), and 1202–1299 (ALKA…TYKH). The segment at 1299–1320 (HHSGHGKGSGSKGKGNHNDKGE) is disordered. The chain crosses the membrane as a helical span at residues 1330–1350 (TFVLTLLIGFALIAVLCAVAV). Residues 1351–1356 (QYLLIN) lie on the Cytoplasmic side of the membrane.

Belongs to the FNDC3 family.

The protein resides in the membrane. This chain is Fibronectin type III domain containing protein 3C1 (Fndc3c1), found in Mus musculus (Mouse).